Here is a 409-residue protein sequence, read N- to C-terminus: Na(+)-translocating NADH-quinone reductase subunit F (409 aa).

The chain crosses the membrane as a helical span at residues 5 to 25 (FIFGIGAFTAIVLVLAVVILI). In terms of domain architecture, 2Fe-2S ferredoxin-type spans 34 to 128 (GDITISINDD…SMDVELPEEV (95 aa)). [2Fe-2S] cluster contacts are provided by Cys71, Cys77, Cys80, and Cys112. The FAD-binding FR-type domain occupies 131–271 (VKKWECTVIS…SGPFGEFFAK (141 aa)).

It belongs to the NqrF family. In terms of assembly, composed of six subunits; NqrA, NqrB, NqrC, NqrD, NqrE and NqrF. It depends on [2Fe-2S] cluster as a cofactor. FAD serves as cofactor.

It is found in the cell inner membrane. The catalysed reaction is a ubiquinone + n Na(+)(in) + NADH + H(+) = a ubiquinol + n Na(+)(out) + NAD(+). Its function is as follows. NQR complex catalyzes the reduction of ubiquinone-1 to ubiquinol by two successive reactions, coupled with the transport of Na(+) ions from the cytoplasm to the periplasm. The first step is catalyzed by NqrF, which accepts electrons from NADH and reduces ubiquinone-1 to ubisemiquinone by a one-electron transfer pathway. In Actinobacillus succinogenes (strain ATCC 55618 / DSM 22257 / CCUG 43843 / 130Z), this protein is Na(+)-translocating NADH-quinone reductase subunit F.